The primary structure comprises 153 residues: ATP synthase subunit b' (153 aa).

The helical transmembrane segment at L23 to F40 threads the bilayer.

It belongs to the ATPase B chain family. In terms of assembly, F-type ATPases have 2 components, F(1) - the catalytic core - and F(0) - the membrane proton channel. F(1) has five subunits: alpha(3), beta(3), gamma(1), delta(1), epsilon(1). F(0) has four main subunits: a(1), b(1), b'(1) and c(10-14). The alpha and beta chains form an alternating ring which encloses part of the gamma chain. F(1) is attached to F(0) by a central stalk formed by the gamma and epsilon chains, while a peripheral stalk is formed by the delta, b and b' chains.

The protein localises to the cellular thylakoid membrane. F(1)F(0) ATP synthase produces ATP from ADP in the presence of a proton or sodium gradient. F-type ATPases consist of two structural domains, F(1) containing the extramembraneous catalytic core and F(0) containing the membrane proton channel, linked together by a central stalk and a peripheral stalk. During catalysis, ATP synthesis in the catalytic domain of F(1) is coupled via a rotary mechanism of the central stalk subunits to proton translocation. Its function is as follows. Component of the F(0) channel, it forms part of the peripheral stalk, linking F(1) to F(0). The b'-subunit is a diverged and duplicated form of b found in plants and photosynthetic bacteria. The sequence is that of ATP synthase subunit b' from Prochlorococcus marinus (strain MIT 9312).